The following is a 191-amino-acid chain: Peptide methionine sulfoxide reductase MsrA (191 aa).

Cys-21 is an active-site residue.

Belongs to the MsrA Met sulfoxide reductase family.

The enzyme catalyses L-methionyl-[protein] + [thioredoxin]-disulfide + H2O = L-methionyl-(S)-S-oxide-[protein] + [thioredoxin]-dithiol. The catalysed reaction is [thioredoxin]-disulfide + L-methionine + H2O = L-methionine (S)-S-oxide + [thioredoxin]-dithiol. In terms of biological role, has an important function as a repair enzyme for proteins that have been inactivated by oxidation. Catalyzes the reversible oxidation-reduction of methionine sulfoxide in proteins to methionine. The polypeptide is Peptide methionine sulfoxide reductase MsrA (Ralstonia nicotianae (strain ATCC BAA-1114 / GMI1000) (Ralstonia solanacearum)).